We begin with the raw amino-acid sequence, 480 residues long: Protein nucleotidyltransferase YdiU (480 aa).

8 residues coordinate ATP: Gly86, Gly88, Arg89, Lys109, Asp121, Gly122, Arg172, and Arg179. Asp248 functions as the Proton acceptor in the catalytic mechanism. 2 residues coordinate Mg(2+): Asn249 and Asp258. Asp258 is a binding site for ATP.

This sequence belongs to the SELO family. Mg(2+) is required as a cofactor. Requires Mn(2+) as cofactor.

It catalyses the reaction L-seryl-[protein] + ATP = 3-O-(5'-adenylyl)-L-seryl-[protein] + diphosphate. The enzyme catalyses L-threonyl-[protein] + ATP = 3-O-(5'-adenylyl)-L-threonyl-[protein] + diphosphate. The catalysed reaction is L-tyrosyl-[protein] + ATP = O-(5'-adenylyl)-L-tyrosyl-[protein] + diphosphate. It carries out the reaction L-histidyl-[protein] + UTP = N(tele)-(5'-uridylyl)-L-histidyl-[protein] + diphosphate. It catalyses the reaction L-seryl-[protein] + UTP = O-(5'-uridylyl)-L-seryl-[protein] + diphosphate. The enzyme catalyses L-tyrosyl-[protein] + UTP = O-(5'-uridylyl)-L-tyrosyl-[protein] + diphosphate. Its function is as follows. Nucleotidyltransferase involved in the post-translational modification of proteins. It can catalyze the addition of adenosine monophosphate (AMP) or uridine monophosphate (UMP) to a protein, resulting in modifications known as AMPylation and UMPylation. The protein is Protein nucleotidyltransferase YdiU of Klebsiella pneumoniae subsp. pneumoniae (strain ATCC 700721 / MGH 78578).